The chain runs to 313 residues: Non-functional target of rapamycin complex subunit LST8-2 (313 aa).

7 WD repeats span residues 1 to 35 (MFENKPDDSPVYLATASHDQTIRLWQARTGRCYFS), 38 to 76 (YPDLHVNRLELTPEKGKLVAACNPHIRLFDLRSYNPHIP), 82 to 121 (SHTKNVMAVGFQYTGHMMYSGSEDGSVKIWDLRVRECQRE), 123 to 162 (RSVSPVNTVVLHPNQTELISGDQNGNIRVWDLRADLCSCE), 166 to 205 (EVGTPIRSLTVMWDGTMVVAANDRGTCYVWRSLCERQTMT), 215 to 255 (AHNS…LEKV), and 258 to 297 (GHERWVWDCDFSMDGEYLVTASSDTTARLWSMRAGKEEMV).

It belongs to the WD repeat LST8 family.

Functionally, probable non-functional protein. In Arabidopsis thaliana (Mouse-ear cress), this protein is Non-functional target of rapamycin complex subunit LST8-2.